The following is a 250-amino-acid chain: Triosephosphate isomerase (250 aa).

9–11 contacts substrate; that stretch reads NWK. Histidine 94 functions as the Electrophile in the catalytic mechanism. Glutamate 166 serves as the catalytic Proton acceptor. Residues glycine 172, serine 211, and 232-233 contribute to the substrate site; that span reads GG.

Belongs to the triosephosphate isomerase family. In terms of assembly, homodimer.

The protein localises to the cytoplasm. The catalysed reaction is D-glyceraldehyde 3-phosphate = dihydroxyacetone phosphate. The protein operates within carbohydrate biosynthesis; gluconeogenesis. It functions in the pathway carbohydrate degradation; glycolysis; D-glyceraldehyde 3-phosphate from glycerone phosphate: step 1/1. Its function is as follows. Involved in the gluconeogenesis. Catalyzes stereospecifically the conversion of dihydroxyacetone phosphate (DHAP) to D-glyceraldehyde-3-phosphate (G3P). This is Triosephosphate isomerase from Methylococcus capsulatus (strain ATCC 33009 / NCIMB 11132 / Bath).